The following is a 90-amino-acid chain: Cell division topological specificity factor (90 aa).

Belongs to the MinE family.

Functionally, prevents the cell division inhibition by proteins MinC and MinD at internal division sites while permitting inhibition at polar sites. This ensures cell division at the proper site by restricting the formation of a division septum at the midpoint of the long axis of the cell. This Bordetella avium (strain 197N) protein is Cell division topological specificity factor.